The sequence spans 92 residues: Small ribosomal subunit protein uS19 (92 aa).

Belongs to the universal ribosomal protein uS19 family.

Functionally, protein S19 forms a complex with S13 that binds strongly to the 16S ribosomal RNA. The polypeptide is Small ribosomal subunit protein uS19 (Rickettsia felis (strain ATCC VR-1525 / URRWXCal2) (Rickettsia azadi)).